The following is a 116-amino-acid chain: MAKLSLFERRRRRVRTALKARSGGRPRLSVHRSGRHIYAQIIDDAAGRTLAAASTLVKGDKSIGANVDAAAKVGAEIAEKAKAAGITTVVFDRGGFLFHGRVKALADAAREGGLEF.

The protein belongs to the universal ribosomal protein uL18 family. In terms of assembly, part of the 50S ribosomal subunit; part of the 5S rRNA/L5/L18/L25 subcomplex. Contacts the 5S and 23S rRNAs.

This is one of the proteins that bind and probably mediate the attachment of the 5S RNA into the large ribosomal subunit, where it forms part of the central protuberance. This is Large ribosomal subunit protein uL18 from Novosphingobium aromaticivorans (strain ATCC 700278 / DSM 12444 / CCUG 56034 / CIP 105152 / NBRC 16084 / F199).